Consider the following 607-residue polypeptide: Phosphoenolpyruvate carboxykinase [GTP] (607 aa).

Substrate contacts are provided by residues Arg-81 and 221–223 (YGG). The Mn(2+) site is built by Lys-230 and His-250. Ser-272 provides a ligand contact to substrate. A GTP-binding site is contributed by 273–278 (ACGKTN). Residue Cys-274 is part of the active site. Asp-297 contributes to the Mn(2+) binding site. Position 388 to 390 (388 to 390 (NSR)) interacts with substrate. GTP-binding positions include Arg-390, Arg-421, and 516–519 (FGDN).

Belongs to the phosphoenolpyruvate carboxykinase [GTP] family. Monomer. Mn(2+) is required as a cofactor.

Its subcellular location is the cytoplasm. It carries out the reaction oxaloacetate + GTP = phosphoenolpyruvate + GDP + CO2. Its pathway is carbohydrate biosynthesis; gluconeogenesis. Functionally, catalyzes the conversion of oxaloacetate (OAA) to phosphoenolpyruvate (PEP), the rate-limiting step in the metabolic pathway that produces glucose from lactate and other precursors derived from the citric acid cycle. This chain is Phosphoenolpyruvate carboxykinase [GTP], found in Renibacterium salmoninarum (strain ATCC 33209 / DSM 20767 / JCM 11484 / NBRC 15589 / NCIMB 2235).